The sequence spans 71 residues: UPF0346 protein Bcer98_1690 (71 aa).

It belongs to the UPF0346 family.

In Bacillus cytotoxicus (strain DSM 22905 / CIP 110041 / 391-98 / NVH 391-98), this protein is UPF0346 protein Bcer98_1690.